Here is a 568-residue protein sequence, read N- to C-terminus: Sulfite reductase [NADPH] hemoprotein beta-component (568 aa).

[4Fe-4S] cluster is bound by residues Cys-426, Cys-432, Cys-471, and Cys-475. A siroheme-binding site is contributed by Cys-475.

This sequence belongs to the nitrite and sulfite reductase 4Fe-4S domain family. Alpha(8)-beta(8). The alpha component is a flavoprotein, the beta component is a hemoprotein. Siroheme serves as cofactor. Requires [4Fe-4S] cluster as cofactor.

It carries out the reaction hydrogen sulfide + 3 NADP(+) + 3 H2O = sulfite + 3 NADPH + 4 H(+). Its pathway is sulfur metabolism; hydrogen sulfide biosynthesis; hydrogen sulfide from sulfite (NADPH route): step 1/1. Component of the sulfite reductase complex that catalyzes the 6-electron reduction of sulfite to sulfide. This is one of several activities required for the biosynthesis of L-cysteine from sulfate. The protein is Sulfite reductase [NADPH] hemoprotein beta-component of Xylella fastidiosa (strain 9a5c).